The primary structure comprises 192 residues: UPF0312 protein ECA1782 (192 aa).

The signal sequence occupies residues 1 to 23 (MLKKTLLSLTAVSMLASAGSALA).

This sequence belongs to the UPF0312 family. Type 1 subfamily.

It localises to the periplasm. This chain is UPF0312 protein ECA1782, found in Pectobacterium atrosepticum (strain SCRI 1043 / ATCC BAA-672) (Erwinia carotovora subsp. atroseptica).